The primary structure comprises 676 residues: Urocanate hydratase (676 aa).

NAD(+) is bound by residues 126-127 (GG), glutamine 204, 251-253 (GMS), glutamate 271, 317-318 (NV), 343-347 (QTSCH), 354-355 (YY), and tyrosine 403. Lysine 534 is subject to N6-succinyllysine. Glycine 594 provides a ligand contact to NAD(+).

Belongs to the urocanase family. NAD(+) serves as cofactor.

It catalyses the reaction 4-imidazolone-5-propanoate = trans-urocanate + H2O. It functions in the pathway amino-acid degradation; L-histidine degradation into L-glutamate; N-formimidoyl-L-glutamate from L-histidine: step 2/3. In Mus musculus (Mouse), this protein is Urocanate hydratase (Uroc1).